A 403-amino-acid polypeptide reads, in one-letter code: Cytoplasmic tRNA 2-thiolation protein 2 (403 aa).

Belongs to the CTU2/NCS2 family.

It localises to the cytoplasm. Its pathway is tRNA modification; 5-methoxycarbonylmethyl-2-thiouridine-tRNA biosynthesis. Its function is as follows. Plays a central role in 2-thiolation of mcm(5)S(2)U at tRNA wobble positions of tRNA(Lys), tRNA(Glu) and tRNA(Gln). May act by forming a heterodimer with NCS6/CTU1 that ligates sulfur from thiocarboxylated URM1 onto the uridine of tRNAs at wobble position. The polypeptide is Cytoplasmic tRNA 2-thiolation protein 2 (Drosophila willistoni (Fruit fly)).